Reading from the N-terminus, the 191-residue chain is Divergent paired-related homeobox (191 aa).

Residues 1–15 are compositionally biased toward basic and acidic residues; it reads MPGSEDLRKGKDQMH. Residues 1–20 are disordered; sequence MPGSEDLRKGKDQMHSHRKR. A DNA-binding region (homeobox) is located at residues 16-75; it reads SHRKRTMFTKKQLEDLNILFNENPYPNPSLQKEMASKIDIHPTVLQVWFKNHRAKLKKAK.

The protein belongs to the paired homeobox family.

Its subcellular location is the nucleus. Its function is as follows. Transcription factor that acts as a repressor. In Homo sapiens (Human), this protein is Divergent paired-related homeobox.